The sequence spans 586 residues: Urease subunit alpha (586 aa).

Residues 134–586 (GAIDTHIHFI…LPMAQRYFLF (453 aa)) enclose the Urease domain. Ni(2+)-binding residues include His-139, His-141, and Lys-222. At Lys-222 the chain carries N6-carboxylysine. His-224 lines the substrate pocket. Ni(2+) contacts are provided by His-251 and His-277. His-325 (proton donor) is an active-site residue. Asp-365 serves as a coordination point for Ni(2+).

This sequence belongs to the metallo-dependent hydrolases superfamily. Urease alpha subunit family. Heterotrimer of UreA (gamma), UreB (beta) and UreC (alpha) subunits. Three heterotrimers associate to form the active enzyme. Ni cation serves as cofactor. Post-translationally, carboxylation allows a single lysine to coordinate two nickel ions.

It is found in the cytoplasm. It carries out the reaction urea + 2 H2O + H(+) = hydrogencarbonate + 2 NH4(+). The protein operates within nitrogen metabolism; urea degradation; CO(2) and NH(3) from urea (urease route): step 1/1. The protein is Urease subunit alpha of Gloeothece citriformis (strain PCC 7424) (Cyanothece sp. (strain PCC 7424)).